Reading from the N-terminus, the 316-residue chain is Melanocyte-stimulating hormone receptor (316 aa).

At 1–37 the chain is on the extracellular side; it reads MPMQGAQRKLLGSLNSTPTATSNLGLAANHTGAPCLE. The N-linked (GlcNAc...) asparagine glycan is linked to N29. Residues 38-63 form a helical membrane-spanning segment; sequence VSIPDGLFLSLGLVSLVENMLVVAAI. The Cytoplasmic segment spans residues 64–72; it reads AKNRNLHSP. Residues 73-93 traverse the membrane as a helical segment; it reads MYCFICCLALSDLLVSGSNML. Residues 94–118 are Extracellular-facing; it reads ETAVVVLLEAGALATRASVVQQLHN. Residues 119 to 140 traverse the membrane as a helical segment; that stretch reads TIDVLTYSSMLCSLCFVGAIAV. Residues 141-163 lie on the Cytoplasmic side of the membrane; sequence DRYISIFYALRYHSIMTLPRVQR. A helical transmembrane segment spans residues 164 to 183; it reads VIAAIWVASVTSSTLFITYY. The Extracellular segment spans residues 184–191; it reads EHVVALLC. Residues 192–210 traverse the membrane as a helical segment; it reads LVVFLTMLVLMAVLYVHML. Topologically, residues 211 to 239 are cytoplasmic; that stretch reads ARACQHAQGITRLHKRQPPAHQGFGLRGA. The helical transmembrane segment at 240-265 threads the bilayer; that stretch reads ATLTILLGIFFLCWGPFFLHLTLVVF. The Extracellular portion of the chain corresponds to 266 to 278; sequence CPQHLTCSCIFKN. The chain crosses the membrane as a helical span at residues 279-299; it reads FKVFLTLIICNTIIDPLIYAF. Topologically, residues 300–316 are cytoplasmic; it reads RSQELCRTLKEVLLCSW. A lipid anchor (S-palmitoyl cysteine) is attached at C314.

Belongs to the G-protein coupled receptor 1 family. In terms of assembly, interacts with MGRN1, but does not undergo MGRN1-mediated ubiquitination; this interaction competes with GNAS-binding and thus inhibits agonist-induced cAMP production. Interacts with OPN3; the interaction results in a decrease in MC1R-mediated cAMP signaling and ultimately a decrease in melanin production in melanocytes.

The protein resides in the cell membrane. Its function is as follows. Receptor for MSH (alpha, beta and gamma) and ACTH. The activity of this receptor is mediated by G proteins which activate adenylate cyclase. Mediates melanogenesis, the production of eumelanin (black/brown) and phaeomelanin (red/yellow), via regulation of cAMP signaling in melanocytes. The chain is Melanocyte-stimulating hormone receptor (MC1R) from Cebus albifrons (White-fronted capuchin).